The chain runs to 655 residues: MERKVLALQARKKRTKAKKDKAQRKPETQHRGSAPHSESDLPEQEEEILGSDDDEQEDPNDYCKGGYHLVKIGDLFNGRYHVIRKLGWGHFSTVWLSWDIQGKKFVAMKVVKSAEHYTETALDEIRLLKSVRNSDPNDPNREMVVQLLDDFKISGVNGTHICMVFEVLGHHLLKWIIKSNYQGLPLPCVKKIIQQVLQGLDYLHTKCRIIHTDIKPENILLSVNEQYIRRLAAEATEWQRSGAPPPSGSAVSTAPQPKPADKMSKNKKKKLKKKQKRQAELLEKRMQEIEEMEKESGPGQKRPNKQEESESPVERPLKENPPNKMTQEKLEESSTIGQDQTLMERDTEGGAAEINCNGVVEVINYTQNSNNETLRHKEDLHNANDCDVQNLNQESSFLSSQNGDSSTSQETDSCTPITSEVSDTMVCQSSSTVDQSFSEQHISQLQESIRVEIPCEDEQEQEHNGPLDNKGKSTAGNFLVNPLEPKNAEKLKVKIADLGNACWVHKHFTEDIQTRQYRSLEVLIGSGYNTPADIWSTACMAFELATGDYLFEPHSGEEYTRDEDHIALIIELLGKVPRKLIVAGKYSKEFFTKKGDLKHITKLKPWGLFEVLVEKYEWSQEEAAGFTDFLLPMLELIPEKRATAAECLRHPWLNS.

Positions 1-57 (MERKVLALQARKKRTKAKKDKAQRKPETQHRGSAPHSESDLPEQEEEILGSDDDEQE) are disordered. The segment covering 10-22 (ARKKRTKAKKDKA) has biased composition (basic residues). The segment covering 40–57 (DLPEQEEEILGSDDDEQE) has biased composition (acidic residues). Phosphoserine; by CK2 is present on serine 51. A Protein kinase domain is found at 80–653 (YHVIRKLGWG…AAECLRHPWL (574 aa)). ATP-binding positions include 86-94 (LGWGHFSTV) and lysine 109. The active-site Proton acceptor is aspartate 213. Disordered stretches follow at residues 238–341 (WQRS…QDQT) and 397–417 (FLSS…CTPI). A compositionally biased stretch (basic residues) spans 265 to 276 (KNKKKKLKKKQK). Composition is skewed to basic and acidic residues over residues 277 to 288 (RQAELLEKRMQE) and 304 to 318 (NKQE…RPLK). Residues serine 309, serine 311, and serine 333 each carry the phosphoserine modification. Serine 555 carries the post-translational modification Phosphoserine; by CK2.

Belongs to the protein kinase superfamily. CMGC Ser/Thr protein kinase family. In terms of assembly, monomer. Found in a multisubunit complex containing seven proteins, named toposome, which separates entangled circular chromatin DNA during chromosome segregation. Interacts with HHV-1 ICP27 protein. Interacts with DNAJC8 and AHSA1/AHA1 and this mediates formation of a complex with the Hsp70 /Hsp90 machinery. Binds to IGF2BP1, SYNCRIP, HNRNPA2B1 and HNRNPC. Interacts with SAFB/SAFB1 and SAFB2 which inhibits its activity. Requires Mg(2+) as cofactor.

Its subcellular location is the cytoplasm. The protein resides in the nucleus. It localises to the nucleoplasm. It is found in the nucleus matrix. The protein localises to the microsome. Its subcellular location is the nucleus speckle. The protein resides in the chromosome. The catalysed reaction is L-seryl-[protein] + ATP = O-phospho-L-seryl-[protein] + ADP + H(+). It catalyses the reaction L-threonyl-[protein] + ATP = O-phospho-L-threonyl-[protein] + ADP + H(+). Activated by phosphorylation on Ser-51 and Ser-555. Its function is as follows. Serine/arginine-rich protein-specific kinase which specifically phosphorylates its substrates at serine residues located in regions rich in arginine/serine dipeptides, known as RS domains and is involved in the phosphorylation of SR splicing factors and the regulation of splicing. Plays a central role in the regulatory network for splicing, controlling the intranuclear distribution of splicing factors in interphase cells and the reorganization of nuclear speckles during mitosis. Can influence additional steps of mRNA maturation, as well as other cellular activities, such as chromatin reorganization in somatic and sperm cells and cell cycle progression. Phosphorylates SFRS2, ZRSR2, LBR and PRM1. Phosphorylates SRSF1 using a directional (C-terminal to N-terminal) and a dual-track mechanism incorporating both processive phosphorylation (in which the kinase stays attached to the substrate after each round of phosphorylation) and distributive phosphorylation steps (in which the kinase and substrate dissociate after each phosphorylation event). The RS domain of SRSF1 binds first to a docking groove in the large lobe of the kinase domain of SRPK1. This induces certain structural changes in SRPK1 and/or RRM2 domain of SRSF1, allowing RRM2 to bind the kinase and initiate phosphorylation. The cycles continue for several phosphorylation steps in a processive manner (steps 1-8) until the last few phosphorylation steps (approximately steps 9-12). During that time, a mechanical stress induces the unfolding of the beta-4 motif in RRM2, which then docks at the docking groove of SRPK1. This also signals RRM2 to begin to dissociate, which facilitates SRSF1 dissociation after phosphorylation is completed. Can mediate hepatitis B virus (HBV) core protein phosphorylation. It plays a negative role in the regulation of HBV replication through a mechanism not involving the phosphorylation of the core protein but by reducing the packaging efficiency of the pregenomic RNA (pgRNA) without affecting the formation of the viral core particles. Can induce splicing of exon 10 in MAPT/TAU. This is SRSF protein kinase 1 from Pongo abelii (Sumatran orangutan).